A 111-amino-acid polypeptide reads, in one-letter code: Large ribosomal subunit protein uL24 (111 aa).

The protein belongs to the universal ribosomal protein uL24 family. In terms of assembly, part of the 50S ribosomal subunit.

Its function is as follows. One of two assembly initiator proteins, it binds directly to the 5'-end of the 23S rRNA, where it nucleates assembly of the 50S subunit. One of the proteins that surrounds the polypeptide exit tunnel on the outside of the subunit. The protein is Large ribosomal subunit protein uL24 of Myxococcus xanthus (strain DK1622).